The following is a 191-amino-acid chain: Fe/S biogenesis protein NfuA (191 aa).

The [4Fe-4S] cluster site is built by Cys149 and Cys152.

Belongs to the NfuA family. Homodimer. The cofactor is [4Fe-4S] cluster.

Involved in iron-sulfur cluster biogenesis. Binds a 4Fe-4S cluster, can transfer this cluster to apoproteins, and thereby intervenes in the maturation of Fe/S proteins. Could also act as a scaffold/chaperone for damaged Fe/S proteins. This chain is Fe/S biogenesis protein NfuA, found in Pectobacterium carotovorum subsp. carotovorum (strain PC1).